Consider the following 531-residue polypeptide: Coiled-coil domain-containing protein 9 (531 aa).

Residues 40–531 (EDRKKAELEG…PGEAWPFESV (492 aa)) form a disordered region. Residues 59 to 72 (RSVEKENVAVESEK) are compositionally biased toward basic and acidic residues. S80 carries the post-translational modification Phosphoserine. T95 bears the Phosphothreonine mark. Omega-N-methylarginine is present on R107. Residue S111 is modified to Phosphoserine. An omega-N-methylarginine mark is found at R121, R128, and R130. An asymmetric dimethylarginine mark is found at R131, R133, and R135. S137 is modified (phosphoserine). Composition is skewed to basic and acidic residues over residues 148–185 (ISDRKSKEWEERRRQNIEKMNEEMEKIAEYERNQREGV), 194–217 (FLDDPRRRSGPLEESERDRREESR), and 227–241 (DFERVRCGLEHERQG). The stretch at 149 to 185 (SDRKSKEWEERRRQNIEKMNEEMEKIAEYERNQREGV) forms a coiled coil. At S202 the chain carries Phosphoserine. Phosphoserine occurs at positions 248 and 255. Composition is skewed to basic and acidic residues over residues 258 to 279 (GRERSEYLRWKQEREKIDQERL), 289 to 302 (WRREWDAEKTDGMF), 311 to 320 (EPSHRYDDQA), and 361 to 372 (YSDHDDRWETKE). Phosphoserine is present on residues S376, S386, and S390. A compositionally biased stretch (low complexity) spans 386-395 (SPETSPKETP). The span at 396–406 (MQPPEIPAPAH) shows a compositional bias: pro residues. Residues 411–446 (DEGEENEGEEDEEWEDISEDEEEEEIEVEEGDEEEP) are compositionally biased toward acidic residues. A Phosphoserine modification is found at S521.

In terms of assembly, probable component of the exon junction complex (EJC); the association is RNA-dependent.

Functionally, probable component of the exon junction complex (EJC), a multiprotein complex that associates immediately upstream of the exon-exon junction on mRNAs and serves as a positional landmark for the intron exon structure of genes and directs post-transcriptional processes in the cytoplasm such as mRNA export, nonsense-mediated mRNA decay (NMD) or translation. The sequence is that of Coiled-coil domain-containing protein 9 from Homo sapiens (Human).